The following is a 131-amino-acid chain: Hypocretin neuropeptide precursor (131 aa).

Residues 1–33 (MNLPSTKVSWAAVTLLLLLLLLPPALLSSGAAA) form the signal peptide. Q34 carries the post-translational modification Pyrrolidone carboxylic acid. 2 cysteine pairs are disulfide-bonded: C39–C45 and C40–C47. A Leucine amide modification is found at L66. At M97 the chain carries Methionine amide. Residues 98-131 (GRRAGAEPAPRPCLGRRCSAPAAASVAPGGQSGI) constitute a propeptide, removed in mature form.

The protein belongs to the orexin family. Specific enzymatic cleavages at paired basic residues yield the different active peptides. As to expression, abundantly expressed in subthalamic nucleus but undetectable in other brain regions tested (hypothalamus was not tested) and in heart, placenta, lung, liver, skeletal muscle, kidney and pancreas.

The protein localises to the rough endoplasmic reticulum. It is found in the cytoplasmic vesicle. Its subcellular location is the synapse. Its function is as follows. Neuropeptides that play a significant role in the regulation of food intake and sleep-wakefulness, possibly by coordinating the complex behavioral and physiologic responses of these complementary homeostatic functions. A broader role in the homeostatic regulation of energy metabolism, autonomic function, hormonal balance and the regulation of body fluids, is also suggested. Binds to orexin receptors HCRTR1/OX1R and HCRTR2/OX2R with a high affinity. Stimulates food intake. Modulates pituitary luteinizing hormone secretion in an ovarian steroid-dependent manner. In terms of biological role, binds to orexin receptor HCRTR2/OX2R only. Stimulates food intake. Modulates pituitary luteinizing hormone secretion in an ovarian steroid-dependent manner. The sequence is that of Hypocretin neuropeptide precursor from Homo sapiens (Human).